The primary structure comprises 197 residues: Nucleoside triphosphate pyrophosphatase (197 aa).

Aspartate 71 functions as the Proton acceptor in the catalytic mechanism.

Belongs to the Maf family. The cofactor is a divalent metal cation.

The protein localises to the cytoplasm. It carries out the reaction a ribonucleoside 5'-triphosphate + H2O = a ribonucleoside 5'-phosphate + diphosphate + H(+). The catalysed reaction is a 2'-deoxyribonucleoside 5'-triphosphate + H2O = a 2'-deoxyribonucleoside 5'-phosphate + diphosphate + H(+). Nucleoside triphosphate pyrophosphatase. May have a dual role in cell division arrest and in preventing the incorporation of modified nucleotides into cellular nucleic acids. The polypeptide is Nucleoside triphosphate pyrophosphatase (Synechococcus sp. (strain JA-3-3Ab) (Cyanobacteria bacterium Yellowstone A-Prime)).